The sequence spans 276 residues: Secreted LysM effector LysM10 (276 aa).

The signal sequence occupies residues 1–22 (MLLSLVKFGILSVFLLAQEAVA). Residues Asn27, Asn104, and Asn140 are each glycosylated (N-linked (GlcNAc...) asparagine). The 46-residue stretch at 219 to 264 (KTYIAKEDDTCKSISEAQSISTDRLVEVNHLDYSCSSLTSGTALCI) folds into the LysM domain. Asn267 carries an N-linked (GlcNAc...) asparagine glycan.

This sequence belongs to the secreted LysM effector family.

It is found in the secreted. Secreted LysM effector that might have a role in sequestration of chitin oligosaccharides (breakdown products of fungal cell walls that are released during invasion and act as triggers of host immunity) to dampen host defense. The polypeptide is Secreted LysM effector LysM10 (Penicillium expansum (Blue mold rot fungus)).